The chain runs to 62 residues: Cobrotoxin II (62 aa).

Residues 1-16 are compositionally biased toward polar residues; it reads LECHNQQSSQTPTTTG. Residues 1–23 form a disordered region; the sequence is LECHNQQSSQTPTTTGCSGGENN. Intrachain disulfides connect C3–C24, C17–C41, C43–C54, and C55–C60.

This sequence belongs to the three-finger toxin family. Short-chain subfamily. Type I alpha-neurotoxin sub-subfamily. In terms of tissue distribution, expressed by the venom gland.

It localises to the secreted. Its function is as follows. Binds to muscle nicotinic acetylcholine receptor (nAChR) and inhibit acetylcholine from binding to the receptor, thereby impairing neuromuscular transmission. The polypeptide is Cobrotoxin II (Naja kaouthia (Monocled cobra)).